Here is a 734-residue protein sequence, read N- to C-terminus: MASRFPKFSQGLAQDPTTRRIWFGIATAHDFESHDDITEERLYHKIFASHFGQLAIIFLWTSGNLFHVAWQGNFEAWVRDPLHVRPIAHAIWDPHFGQPAIEAFTRGGAPGPVNIAYSGVYQWWYTIGLRTNEDLYAGALFLLFLSVIFLIAGRLHLQPKWRPSVSWFKNAESRLNHHLSGLFGVSSLAWTGHLVHVAIPESRGVHVRWDNFLDELPHPQGLEPFFTGQWNLYAQNPDSSSHLFGTSQGAGTAILTLLGGFHPQTQSLWLTDMAHHHLAIAFVFSIAGHMYRTNFGIGHSMEDILEAHVPPGGLLGRGHKGLYNTINNSLHFQLGLALASLGVITSLVAQHMYSLPAYAFIAQDFTTQAALYTHHQYIAGFIMTGAFAHGAIFLIRDYNPEQNKDNVLARMLEHKEAIISHLSWVSLLLGFHTLGLYVHNDVMLAFGTPEKQILIEPIFAQWIQSAHGKTLYGFDILLSSTSGPAFDAGKSIWLPGWLNAINDNNNSLFSTIGPGDFLVHHAIALGLHTTTLILVKGALDARGSRLMPDKKDFGYSFPCDGPGRGGTCDISAWDAFYLAVFWMLNTIGWVTFYWHWKHITLWQGNVAQFNESSTYLMGWSRDYLWLNSSQLINGYNPFGMNSLSVWAWMFLFGHLVWATGFMFLISWRGYWQELIETLAWAHERTPLANLVRWRDKPVALSIVQARLVGLAHFSVGYIFTYAAFLIASTSGKFG.

The next 8 helical transmembrane spans lie at 46-69 (IFAS…FHVA), 135-158 (LYAG…LHLQ), 175-199 (LNHH…HVAI), 273-291 (MAHH…GHMY), 330-353 (LHFQ…QHMY), 369-395 (AALY…IFLI), 417-439 (AIIS…LYVH), and 517-535 (FLVH…LILV). Residues Cys559 and Cys568 each contribute to the [4Fe-4S] cluster site. The next 2 membrane-spanning stretches (helical) occupy residues 575 to 596 (AFYL…YWHW) and 643 to 665 (LSVW…MFLI). Positions 654, 662, and 670 each coordinate chlorophyll a. Trp671 serves as a coordination point for phylloquinone. A helical membrane pass occupies residues 707 to 727 (LVGLAHFSVGYIFTYAAFLIA).

This sequence belongs to the PsaA/PsaB family. The PsaA/B heterodimer binds the P700 chlorophyll special pair and subsequent electron acceptors. PSI consists of a core antenna complex that captures photons, and an electron transfer chain that converts photonic excitation into a charge separation. The eukaryotic PSI reaction center is composed of at least 11 subunits. It depends on P700 is a chlorophyll a/chlorophyll a' dimer, A0 is one or more chlorophyll a, A1 is one or both phylloquinones and FX is a shared 4Fe-4S iron-sulfur center. as a cofactor.

It localises to the plastid. Its subcellular location is the chloroplast thylakoid membrane. It carries out the reaction reduced [plastocyanin] + hnu + oxidized [2Fe-2S]-[ferredoxin] = oxidized [plastocyanin] + reduced [2Fe-2S]-[ferredoxin]. PsaA and PsaB bind P700, the primary electron donor of photosystem I (PSI), as well as the electron acceptors A0, A1 and FX. PSI is a plastocyanin-ferredoxin oxidoreductase, converting photonic excitation into a charge separation, which transfers an electron from the donor P700 chlorophyll pair to the spectroscopically characterized acceptors A0, A1, FX, FA and FB in turn. Oxidized P700 is reduced on the lumenal side of the thylakoid membrane by plastocyanin. The sequence is that of Photosystem I P700 chlorophyll a apoprotein A2 from Pinus koraiensis (Korean pine).